The following is a 101-amino-acid chain: Small ribosomal subunit protein uS14 (101 aa).

The protein belongs to the universal ribosomal protein uS14 family. Part of the 30S ribosomal subunit. Contacts proteins S3 and S10.

Binds 16S rRNA, required for the assembly of 30S particles and may also be responsible for determining the conformation of the 16S rRNA at the A site. The chain is Small ribosomal subunit protein uS14 from Aromatoleum aromaticum (strain DSM 19018 / LMG 30748 / EbN1) (Azoarcus sp. (strain EbN1)).